A 318-amino-acid chain; its full sequence is Methionyl-tRNA formyltransferase (318 aa).

112 to 115 (SILP) provides a ligand contact to (6S)-5,6,7,8-tetrahydrofolate.

It belongs to the Fmt family.

The catalysed reaction is L-methionyl-tRNA(fMet) + (6R)-10-formyltetrahydrofolate = N-formyl-L-methionyl-tRNA(fMet) + (6S)-5,6,7,8-tetrahydrofolate + H(+). In terms of biological role, attaches a formyl group to the free amino group of methionyl-tRNA(fMet). The formyl group appears to play a dual role in the initiator identity of N-formylmethionyl-tRNA by promoting its recognition by IF2 and preventing the misappropriation of this tRNA by the elongation apparatus. In Haemophilus influenzae (strain ATCC 51907 / DSM 11121 / KW20 / Rd), this protein is Methionyl-tRNA formyltransferase.